A 188-amino-acid chain; its full sequence is HTH-type transcriptional repressor AcnR (188 aa).

The HTH tetR-type domain maps to 10–70 (TNSRQEILEG…ALAREDAARM (61 aa)). The H-T-H motif DNA-binding region spans 33 to 52 (TVRRLEEATGKSRGAIFHHF). Citrate contacts are provided by residues 79–80 (LV), Arg-130, and Asn-134. Residue Glu-181 coordinates Mg(2+). Arg-185 provides a ligand contact to citrate.

In terms of assembly, homodimer.

In terms of biological role, acnR negatively controls the expression of the aconitase gene acn. Binds to the imperfect inverted repeat in the acn promoter region. In Corynebacterium glutamicum (strain ATCC 13032 / DSM 20300 / JCM 1318 / BCRC 11384 / CCUG 27702 / LMG 3730 / NBRC 12168 / NCIMB 10025 / NRRL B-2784 / 534), this protein is HTH-type transcriptional repressor AcnR.